Reading from the N-terminus, the 107-residue chain is Late histone H2B.L4 (107 aa).

O-linked (GlcNAc) serine glycosylation occurs at serine 94. Lysine 102 is covalently cross-linked (Glycyl lysine isopeptide (Lys-Gly) (interchain with G-Cter in ubiquitin)).

This sequence belongs to the histone H2B family. The nucleosome is a histone octamer containing two molecules each of H2A, H2B, H3 and H4 assembled in one H3-H4 heterotetramer and two H2A-H2B heterodimers. The octamer wraps approximately 147 bp of DNA. In terms of processing, monoubiquitination gives a specific tag for epigenetic transcriptional activation and is also prerequisite for histone H3 'Lys-4' and 'Lys-79' methylation. GlcNAcylation at Ser-94 promotes monoubiquitination of Lys-102. It fluctuates in response to extracellular glucose, and associates with transcribed genes.

The protein localises to the nucleus. The protein resides in the chromosome. In terms of biological role, core component of nucleosome. Nucleosomes wrap and compact DNA into chromatin, limiting DNA accessibility to the cellular machineries which require DNA as a template. Histones thereby play a central role in transcription regulation, DNA repair, DNA replication and chromosomal stability. DNA accessibility is regulated via a complex set of post-translational modifications of histones, also called histone code, and nucleosome remodeling. This is Late histone H2B.L4 from Strongylocentrotus purpuratus (Purple sea urchin).